A 420-amino-acid polypeptide reads, in one-letter code: Histidine--tRNA ligase (420 aa).

The protein belongs to the class-II aminoacyl-tRNA synthetase family. In terms of assembly, homodimer.

Its subcellular location is the cytoplasm. The catalysed reaction is tRNA(His) + L-histidine + ATP = L-histidyl-tRNA(His) + AMP + diphosphate + H(+). This Mycoplasmopsis pulmonis (strain UAB CTIP) (Mycoplasma pulmonis) protein is Histidine--tRNA ligase (hisS).